The primary structure comprises 131 residues: Large ribosomal subunit protein bL17 (131 aa).

The protein belongs to the bacterial ribosomal protein bL17 family. Part of the 50S ribosomal subunit. Contacts protein L32.

The sequence is that of Large ribosomal subunit protein bL17 from Shewanella violacea (strain JCM 10179 / CIP 106290 / LMG 19151 / DSS12).